The chain runs to 175 residues: NADH-ubiquinone oxidoreductase chain 6 (175 aa).

6 helical membrane passes run 1–21 (MMYI…GFSS), 24–44 (SPVY…GIIM), 51–71 (LGLV…GYTI), 87–107 (VVLS…VWLF), 112–132 (ELVG…EGGF), and 148–168 (CGFW…FIAT).

It belongs to the complex I subunit 6 family. In terms of assembly, core subunit of respiratory chain NADH dehydrogenase (Complex I) which is composed of 45 different subunits.

The protein localises to the mitochondrion inner membrane. The catalysed reaction is a ubiquinone + NADH + 5 H(+)(in) = a ubiquinol + NAD(+) + 4 H(+)(out). Functionally, core subunit of the mitochondrial membrane respiratory chain NADH dehydrogenase (Complex I) which catalyzes electron transfer from NADH through the respiratory chain, using ubiquinone as an electron acceptor. Essential for the catalytic activity and assembly of complex I. This is NADH-ubiquinone oxidoreductase chain 6 (MT-ND6) from Elephas maximus (Indian elephant).